We begin with the raw amino-acid sequence, 421 residues long: Granaticin polyketide putative beta-ketoacyl synthase 1 (421 aa).

One can recognise a Ketosynthase family 3 (KS3) domain in the interval 2–416 (TRRVVITGVG…GFQSAMVLHR (415 aa)). Catalysis depends on for beta-ketoacyl synthase activity residues C169, H309, and H346.

This sequence belongs to the thiolase-like superfamily. Beta-ketoacyl-ACP synthases family.

The protein operates within antibiotic biosynthesis; granaticin biosynthesis. The polypeptide is Granaticin polyketide putative beta-ketoacyl synthase 1 (gra-orf1) (Streptomyces violaceoruber).